A 184-amino-acid polypeptide reads, in one-letter code: Large ribosomal subunit protein uL5c (184 aa).

This sequence belongs to the universal ribosomal protein uL5 family. As to quaternary structure, part of the 50S ribosomal subunit; contacts the 5S rRNA.

The protein localises to the plastid. The protein resides in the chloroplast. Its function is as follows. Binds 5S rRNA, forms part of the central protuberance of the 50S subunit. This is Large ribosomal subunit protein uL5c (rpl5) from Ostreococcus tauri.